We begin with the raw amino-acid sequence, 287 residues long: ATP phosphoribosyltransferase (287 aa).

This sequence belongs to the ATP phosphoribosyltransferase family. Long subfamily. Mg(2+) serves as cofactor.

It localises to the cytoplasm. It catalyses the reaction 1-(5-phospho-beta-D-ribosyl)-ATP + diphosphate = 5-phospho-alpha-D-ribose 1-diphosphate + ATP. Its pathway is amino-acid biosynthesis; L-histidine biosynthesis; L-histidine from 5-phospho-alpha-D-ribose 1-diphosphate: step 1/9. Feedback inhibited by histidine. In terms of biological role, catalyzes the condensation of ATP and 5-phosphoribose 1-diphosphate to form N'-(5'-phosphoribosyl)-ATP (PR-ATP). Has a crucial role in the pathway because the rate of histidine biosynthesis seems to be controlled primarily by regulation of HisG enzymatic activity. This chain is ATP phosphoribosyltransferase (hisG), found in Methanothermobacter thermautotrophicus (strain ATCC 29096 / DSM 1053 / JCM 10044 / NBRC 100330 / Delta H) (Methanobacterium thermoautotrophicum).